A 135-amino-acid polypeptide reads, in one-letter code: uncharacterized protein (135 aa).

The next 4 helical transmembrane spans lie at 4–24 (IIIC…WIFG), 26–46 (WDMP…TGVI), 68–88 (LILV…NGAW), and 93–113 (LIAY…CAAL).

Belongs to the bacteriophage holin family. Cp-1 holin subfamily.

It localises to the cell membrane. This is an uncharacterized protein from Clostridium perfringens (strain 13 / Type A).